We begin with the raw amino-acid sequence, 187 residues long: Transcription antitermination protein NusB (187 aa).

Residues 135–187 (APAPESVAEEADEESSDSDAAASDPTDEGDVSDSSGASDEPAAPSAEIQPTVD) are disordered. The span at 141-151 (VAEEADEESSD) shows a compositional bias: acidic residues.

This sequence belongs to the NusB family.

In terms of biological role, involved in transcription antitermination. Required for transcription of ribosomal RNA (rRNA) genes. Binds specifically to the boxA antiterminator sequence of the ribosomal RNA (rrn) operons. The protein is Transcription antitermination protein NusB of Bifidobacterium longum subsp. infantis (strain ATCC 15697 / DSM 20088 / JCM 1222 / NCTC 11817 / S12).